Consider the following 293-residue polypeptide: Ribosomal protein L11 methyltransferase (293 aa).

S-adenosyl-L-methionine contacts are provided by Thr-145, Gly-166, Asp-188, and Asn-230.

It belongs to the methyltransferase superfamily. PrmA family.

It localises to the cytoplasm. The catalysed reaction is L-lysyl-[protein] + 3 S-adenosyl-L-methionine = N(6),N(6),N(6)-trimethyl-L-lysyl-[protein] + 3 S-adenosyl-L-homocysteine + 3 H(+). In terms of biological role, methylates ribosomal protein L11. This is Ribosomal protein L11 methyltransferase from Salmonella agona (strain SL483).